Here is a 362-residue protein sequence, read N- to C-terminus: H-2 class I histocompatibility antigen, D-K alpha chain (362 aa).

An N-terminal signal peptide occupies residues 1–24; that stretch reads MGAMVPRTLLLLLAAALAPAQTRA. The interval 25–114 is alpha-1; that stretch reads GPHSLRYFET…LLRYYNQSEG (90 aa). At 25 to 306 the chain is on the extracellular side; that stretch reads GPHSLRYFET…RWEPPPSTDS (282 aa). Asn-110 is a glycosylation site (N-linked (GlcNAc...) asparagine). An alpha-2 region spans residues 115–206; the sequence is GSHTIQRLSG…ELGNATLLHT (92 aa). Cys-125 and Cys-188 are disulfide-bonded. 2 N-linked (GlcNAc...) asparagine glycosylation sites follow: Asn-200 and Asn-280. The segment at 207-298 is alpha-3; it reads DSPKAHVTHH…GLPEPLTLRW (92 aa). In terms of domain architecture, Ig-like C1-type spans 209-297; that stretch reads PKAHVTHHPR…EGLPEPLTLR (89 aa). The cysteines at positions 227 and 283 are disulfide-linked. The connecting peptide stretch occupies residues 299-306; that stretch reads EPPPSTDS. The chain crosses the membrane as a helical span at residues 307–333; sequence YMVIVAVLGVLGAVAIIGAVVAFVMMM. Residues 334–362 lie on the Cytoplasmic side of the membrane; it reads RRNTGGKGGDYTLTPGSQSSEMSLPDCKA. Residues 340 to 362 form a disordered region; that stretch reads KGGDYTLTPGSQSSEMSLPDCKA. Phosphoserine is present on residues Ser-353 and Ser-356.

Belongs to the MHC class I family. As to quaternary structure, heterodimer of an alpha chain and a beta chain (beta-2-microglobulin). Polyubiquitinated in case of infection by murid herpesvirus 4, by the viral E3 ligase K3 (mK3), leading to target the protein for rapid degradation by the endoplasmic reticulum-associated degradation (ERAD) system. Ubiquitination takes place on lysine, as well as serine and threonine residues present in the cytoplasmic tail. Hydroxylated serine and threonine residues in the cytoplasmic tail are subject to ubiquitination via ester bonds instead of the classical isopeptide linkage. In terms of processing, hydroxylation of residues in the cytoplasmic tail.

It is found in the membrane. Functionally, involved in the presentation of foreign antigens to the immune system. The chain is H-2 class I histocompatibility antigen, D-K alpha chain (H2-D1) from Mus musculus (Mouse).